The following is a 505-amino-acid chain: Protein disulfide-isomerase (505 aa).

A signal peptide spans 1-20 (MHKAQKFALGLLAAAAVATA). 2 consecutive Thioredoxin domains span residues 21-128 (SDVV…QSLP) and 335-465 (FVAG…ENGK). Catalysis depends on nucleophile residues Cys50, Cys53, Cys385, and Cys388. Intrachain disulfides connect Cys50-Cys53 and Cys385-Cys388. The tract at residues 470 to 505 (ISEDAEETSSATETTTETATKSEEAAKETATEHDEL) is disordered. Positions 477-488 (TSSATETTTETA) are enriched in low complexity. Residues 489–505 (TKSEEAAKETATEHDEL) show a composition bias toward basic and acidic residues. Residues 502 to 505 (HDEL) carry the Prevents secretion from ER motif.

This sequence belongs to the protein disulfide isomerase family.

Its subcellular location is the endoplasmic reticulum lumen. The catalysed reaction is Catalyzes the rearrangement of -S-S- bonds in proteins.. In terms of biological role, participates in the folding of proteins containing disulfide bonds, may be involved in glycosylation, prolyl hydroxylation and triglyceride transfer. This chain is Protein disulfide-isomerase, found in Humicola insolens (Soft-rot fungus).